Here is a 63-residue protein sequence, read N- to C-terminus: MNAQYATCYLCDELVYLFKKQFARTSASAAALYRKRMAIVRRGVVLCQRCSSALHGGDDPDRR.

This is an uncharacterized protein from Orgyia pseudotsugata (Douglas-fir tussock moth).